Reading from the N-terminus, the 1447-residue chain is Baculoviral IAP repeat-containing protein 1b (1447 aa).

BIR repeat units follow at residues 60–127 (EAKR…CEFL), 159–227 (EEAR…CEFL), and 278–345 (EELR…CVFL). Cysteine 315, cysteine 318, histidine 335, and cysteine 342 together coordinate Zn(2+). An NACHT domain is found at 508-802 (SVMCVEGEAG…EFLAAVRLTE (295 aa)). Lysine 520 lines the ATP pocket.

As to quaternary structure, component of the NLRC4 inflammasome, at least composed of NLRC4, caspase-1 (CASP1) and some NAIP protein. Interacts with S.typhimurium (Salmonella) PrgJ and B.thailandensis BsaK.

Its function is as follows. Sensor component of the NLRC4 inflammasome that specifically recognizes and binds type III secretion system (T3SS) rod proteins such as S.typhimurium (Salmonella) PrgJ and B.thailandensis BsaK from pathogenic bacteria. Association of pathogenic bacteria proteins drives in turn drive assembly and activation of the NLRC4 inflammasome, promoting caspase-1 activation, cytokine production and macrophage pyroptosis. The NLRC4 inflammasome is activated as part of the innate immune response to a range of intracellular bacteria. The NLRC4 inflammasome senses Gram-negative bacteria such as L.pneumophila and P.aeruginosa, enteric pathogens S.typhimurium (Salmonella) and S.flexneri. Prevents motor-neuron apoptosis induced by a variety of signals. The protein is Baculoviral IAP repeat-containing protein 1b (Naip2) of Mus musculus (Mouse).